The primary structure comprises 320 residues: ATP synthase gamma chain (320 aa).

Belongs to the ATPase gamma chain family. F-type ATPases have 2 components, CF(1) - the catalytic core - and CF(0) - the membrane proton channel. CF(1) has five subunits: alpha(3), beta(3), gamma(1), delta(1), epsilon(1). CF(0) has three main subunits: a, b and c.

Its subcellular location is the cell membrane. Produces ATP from ADP in the presence of a proton gradient across the membrane. The gamma chain is believed to be important in regulating ATPase activity and the flow of protons through the CF(0) complex. In Lactobacillus helveticus (strain DPC 4571), this protein is ATP synthase gamma chain.